The sequence spans 925 residues: Aspulvinone E synthetase melA (925 aa).

The segment at 11-434 (ETAAARNGDG…GGRAKETIII (424 aa)) is adenylation (A) domain. The region spanning 564–644 (SPKNDFEKGL…ELAAALDNLY (81 aa)) is the Carrier domain. An O-(pantetheine 4'-phosphoryl)serine modification is found at S601. Residues 663–923 (PLWLVHPGAG…KILRSALAER (261 aa)) are thioesterase (TE) domain.

This sequence belongs to the NRP synthetase family.

Its subcellular location is the cytoplasm. The enzyme catalyses 2 3-(4-hydroxyphenyl)pyruvate + AH2 + 2 ATP + O2 = aspulvinone E + A + 2 AMP + CO2 + 2 diphosphate + H2O + H(+). In terms of biological role, nonribosomal peptide synthase; part of the gene cluster that mediates the biosynthesis of Asp-melanin, a pigment that confers resistance against UV light and hampers phagocytosis by soil amoeba. The nonribosomal peptide synthase melA converts 4-hydroxyphenylpyruvate (4-HPPA) to aspulvinone E. The tyrosinase tyrP then performs hydroxylations of both aromatic moieties of aspulvinone E. The product of tyrP is highly unstable, and, due to the high reactivity of methides and ortho-diquinones, the polymeric Asp-melanin forms spontaneously. This chain is Aspulvinone E synthetase melA, found in Aspergillus terreus (strain NIH 2624 / FGSC A1156).